The sequence spans 327 residues: Dolichyl-phosphate beta-glucosyltransferase ALG5D (327 aa).

Topologically, residues Met1–Ala6 are lumenal. A helical transmembrane segment spans residues Glu7 to Met27. Topologically, residues Arg28–Phe327 are cytoplasmic.

It belongs to the glycosyltransferase 2 family.

It is found in the endoplasmic reticulum membrane. It catalyses the reaction a di-trans,poly-cis-dolichyl phosphate + UDP-alpha-D-glucose = a di-trans,poly-cis-dolichyl beta-D-glucosyl phosphate + UDP. Its pathway is protein modification; protein glycosylation. In terms of biological role, dolichyl-phosphate beta-glucosyltransferase involved in the glycosylation of glycoproteins through the synthesis of dolichyl beta-D-glucosyl phosphate which serves as a sugar donor for transfer of three glucose residues to the Man-9-GlcNAc-2-PP-dolichol precursor to N-glycans. This Trichomonas vaginalis (strain ATCC PRA-98 / G3) protein is Dolichyl-phosphate beta-glucosyltransferase ALG5D.